Here is a 70-residue protein sequence, read N- to C-terminus: UPF0337 protein BT9727_3385 (70 aa).

Belongs to the UPF0337 (CsbD) family.

In Bacillus thuringiensis subsp. konkukian (strain 97-27), this protein is UPF0337 protein BT9727_3385.